A 153-amino-acid chain; its full sequence is 6,7-dimethyl-8-ribityllumazine synthase (153 aa).

5-amino-6-(D-ribitylamino)uracil contacts are provided by residues phenylalanine 22, 56 to 58 (AFE), and 80 to 82 (TVI). A (2S)-2-hydroxy-3-oxobutyl phosphate-binding site is contributed by 85-86 (ST). Histidine 88 functions as the Proton donor in the catalytic mechanism. A 5-amino-6-(D-ribitylamino)uracil-binding site is contributed by phenylalanine 113. Arginine 127 is a (2S)-2-hydroxy-3-oxobutyl phosphate binding site.

Belongs to the DMRL synthase family. Forms an icosahedral capsid composed of 60 subunits, arranged as a dodecamer of pentamers.

The catalysed reaction is (2S)-2-hydroxy-3-oxobutyl phosphate + 5-amino-6-(D-ribitylamino)uracil = 6,7-dimethyl-8-(1-D-ribityl)lumazine + phosphate + 2 H2O + H(+). It participates in cofactor biosynthesis; riboflavin biosynthesis; riboflavin from 2-hydroxy-3-oxobutyl phosphate and 5-amino-6-(D-ribitylamino)uracil: step 1/2. Its function is as follows. Catalyzes the formation of 6,7-dimethyl-8-ribityllumazine by condensation of 5-amino-6-(D-ribitylamino)uracil with 3,4-dihydroxy-2-butanone 4-phosphate. This is the penultimate step in the biosynthesis of riboflavin. This is 6,7-dimethyl-8-ribityllumazine synthase from Haemophilus ducreyi (strain 35000HP / ATCC 700724).